Consider the following 360-residue polypeptide: Methylthioribose-1-phosphate isomerase (360 aa).

The active-site Proton donor is Asp246.

The protein belongs to the eIF-2B alpha/beta/delta subunits family. MtnA subfamily.

It localises to the cytoplasm. The protein localises to the nucleus. The enzyme catalyses 5-(methylsulfanyl)-alpha-D-ribose 1-phosphate = 5-(methylsulfanyl)-D-ribulose 1-phosphate. It participates in amino-acid biosynthesis; L-methionine biosynthesis via salvage pathway; L-methionine from S-methyl-5-thio-alpha-D-ribose 1-phosphate: step 1/6. Catalyzes the interconversion of methylthioribose-1-phosphate (MTR-1-P) into methylthioribulose-1-phosphate (MTRu-1-P). The chain is Methylthioribose-1-phosphate isomerase from Aedes aegypti (Yellowfever mosquito).